The primary structure comprises 288 residues: Quinate/shikimate dehydrogenase (288 aa).

Residues K71 and D107 each coordinate substrate. Residues 132–135, 155–158, K205, 232–235, and G255 each bind NAD(+); these read AGGA, NRKD, and CVYN.

Belongs to the shikimate dehydrogenase family. As to quaternary structure, homodimer.

The catalysed reaction is L-quinate + NAD(+) = 3-dehydroquinate + NADH + H(+). It catalyses the reaction L-quinate + NADP(+) = 3-dehydroquinate + NADPH + H(+). It carries out the reaction shikimate + NADP(+) = 3-dehydroshikimate + NADPH + H(+). The enzyme catalyses shikimate + NAD(+) = 3-dehydroshikimate + NADH + H(+). Its pathway is metabolic intermediate biosynthesis; chorismate biosynthesis; chorismate from D-erythrose 4-phosphate and phosphoenolpyruvate: step 4/7. Its function is as follows. The actual biological function of YdiB remains unclear, nor is it known whether 3-dehydroshikimate or quinate represents the natural substrate. Catalyzes the reversible NAD-dependent reduction of both 3-dehydroshikimate (DHSA) and 3-dehydroquinate to yield shikimate (SA) and quinate, respectively. It can use both NAD or NADP for catalysis, however it has higher catalytic efficiency with NAD. This Salmonella agona (strain SL483) protein is Quinate/shikimate dehydrogenase.